Consider the following 101-residue polypeptide: MAKKSMIAREVKRQKLNGRYEKKRAELKSLIKGVETPDEQREAAIVALQKLPRDSAATRQRNRCQLTGRPHGFYRKFGLGRNKLRECVMRGEVPGVVKASW.

It belongs to the universal ribosomal protein uS14 family. As to quaternary structure, part of the 30S ribosomal subunit. Contacts proteins S3 and S10.

Binds 16S rRNA, required for the assembly of 30S particles and may also be responsible for determining the conformation of the 16S rRNA at the A site. The chain is Small ribosomal subunit protein uS14 from Methylococcus capsulatus (strain ATCC 33009 / NCIMB 11132 / Bath).